The sequence spans 273 residues: Large ribosomal subunit protein uL2 (273 aa).

The disordered stretch occupies residues 222–273 (GVAMNPVDHPMGGGEGRSSGGRHPCTPWGVPTKGYRTRKSKRSDKLIVHRRK). Residues 264–273 (SDKLIVHRRK) show a composition bias toward basic and acidic residues.

It belongs to the universal ribosomal protein uL2 family. Part of the 50S ribosomal subunit. Forms a bridge to the 30S subunit in the 70S ribosome.

Its function is as follows. One of the primary rRNA binding proteins. Required for association of the 30S and 50S subunits to form the 70S ribosome, for tRNA binding and peptide bond formation. It has been suggested to have peptidyltransferase activity; this is somewhat controversial. Makes several contacts with the 16S rRNA in the 70S ribosome. This is Large ribosomal subunit protein uL2 from Syntrophobacter fumaroxidans (strain DSM 10017 / MPOB).